A 416-amino-acid chain; its full sequence is 3-isopropylmalate dehydratase large subunit (416 aa).

Residues cysteine 299, cysteine 357, and cysteine 360 each coordinate [4Fe-4S] cluster.

This sequence belongs to the aconitase/IPM isomerase family. LeuC type 2 subfamily. In terms of assembly, heterodimer of LeuC and LeuD. The cofactor is [4Fe-4S] cluster.

The catalysed reaction is (2R,3S)-3-isopropylmalate = (2S)-2-isopropylmalate. The protein operates within amino-acid biosynthesis; L-leucine biosynthesis; L-leucine from 3-methyl-2-oxobutanoate: step 2/4. Its function is as follows. Catalyzes the isomerization between 2-isopropylmalate and 3-isopropylmalate, via the formation of 2-isopropylmaleate. The protein is 3-isopropylmalate dehydratase large subunit of Saccharolobus solfataricus (strain ATCC 35092 / DSM 1617 / JCM 11322 / P2) (Sulfolobus solfataricus).